Reading from the N-terminus, the 398-residue chain is Proteasome-activating nucleotidase (398 aa).

Residues 3-60 (DSEIQYLLEKLKKLEEDYYKLRELYRRLEDEKKFIESERIRYEREVRRLRSEVERLRS) are a coiled coil. ATP-binding positions include 185–190 (GTGKTL) and His-324. The interval 396-398 (MFV) is docks into pockets in the proteasome alpha-ring to cause gate opening.

The protein belongs to the AAA ATPase family. Homohexamer. The hexameric complex has a two-ring architecture resembling a top hat that caps the 20S proteasome core at one or both ends. Upon ATP-binding, the C-terminus of PAN interacts with the alpha-rings of the proteasome core by binding to the intersubunit pockets.

It localises to the cytoplasm. ATPase which is responsible for recognizing, binding, unfolding and translocation of substrate proteins into the archaeal 20S proteasome core particle. Is essential for opening the gate of the 20S proteasome via an interaction with its C-terminus, thereby allowing substrate entry and access to the site of proteolysis. Thus, the C-termini of the proteasomal ATPase function like a 'key in a lock' to induce gate opening and therefore regulate proteolysis. Unfolding activity requires energy from ATP hydrolysis, whereas ATP binding alone promotes ATPase-20S proteasome association which triggers gate opening, and supports translocation of unfolded substrates. The sequence is that of Proteasome-activating nucleotidase from Archaeoglobus fulgidus (strain ATCC 49558 / DSM 4304 / JCM 9628 / NBRC 100126 / VC-16).